The primary structure comprises 290 residues: 33 kDa chaperonin (290 aa).

2 cysteine pairs are disulfide-bonded: C231–C233 and C263–C266.

This sequence belongs to the HSP33 family. In terms of processing, under oxidizing conditions two disulfide bonds are formed involving the reactive cysteines. Under reducing conditions zinc is bound to the reactive cysteines and the protein is inactive.

The protein resides in the cytoplasm. Functionally, redox regulated molecular chaperone. Protects both thermally unfolding and oxidatively damaged proteins from irreversible aggregation. Plays an important role in the bacterial defense system toward oxidative stress. The polypeptide is 33 kDa chaperonin (Thermotoga maritima (strain ATCC 43589 / DSM 3109 / JCM 10099 / NBRC 100826 / MSB8)).